Here is a 386-residue protein sequence, read N- to C-terminus: Cystathionine gamma-synthase (386 aa).

Lys198 is modified (N6-(pyridoxal phosphate)lysine).

Belongs to the trans-sulfuration enzymes family. Homotetramer. Pyridoxal 5'-phosphate serves as cofactor.

Its subcellular location is the cytoplasm. The enzyme catalyses O-succinyl-L-homoserine + L-cysteine = L,L-cystathionine + succinate + H(+). The protein operates within amino-acid biosynthesis; L-methionine biosynthesis via de novo pathway; L-cystathionine from O-succinyl-L-homoserine: step 1/1. Functionally, catalyzes the formation of L-cystathionine from O-succinyl-L-homoserine (OSHS) and L-cysteine, via a gamma-replacement reaction. In the absence of thiol, catalyzes gamma-elimination to form 2-oxobutanoate, succinate and ammonia. The sequence is that of Cystathionine gamma-synthase (metB) from Escherichia coli (strain K12).